The sequence spans 612 residues: Coagulation factor XII (612 aa).

A signal peptide spans 1–19 (MRALLLLGALLVSLESTVS). The Fibronectin type-II domain occupies 42-90 (VTGEPCHFPFQYHRQLHHKCIHRGRPGPRPWCATTPNFEKDQRWAYCLE). 20 disulfide bridges follow: cysteine 47-cysteine 73, cysteine 61-cysteine 88, cysteine 98-cysteine 110, cysteine 104-cysteine 119, cysteine 121-cysteine 130, cysteine 135-cysteine 163, cysteine 161-cysteine 170, cysteine 178-cysteine 189, cysteine 183-cysteine 198, cysteine 200-cysteine 209, cysteine 217-cysteine 306, cysteine 240-cysteine 288, cysteine 268-cysteine 301, cysteine 355-cysteine 482, cysteine 393-cysteine 409, cysteine 401-cysteine 471, cysteine 432-cysteine 435, cysteine 498-cysteine 566, cysteine 529-cysteine 545, and cysteine 556-cysteine 587. Residues 94-131 (VKDHCSKHNPCQKGGTCVNMPDGPRCICADHFTGKHCQ) form the EGF-like 1 domain. An O-linked (Fuc) threonine glycan is attached at threonine 109. The Fibronectin type-I domain occupies 133-173 (EKCFEPQFFRFFHENEIWHRLEPAGVVKCQCKGPNAQCKPL). The EGF-like 2 domain maps to 174–210 (ASQVCRTNPCLNGGSCLQAEGHRLCRCAPSFAGRLCD). The Kringle domain maps to 217–306 (CYDDRDRGLS…SWNYCRLAPC (90 aa)). N-linked (GlcNAc...) asparagine glycosylation is found at asparagine 251 and asparagine 282. Residues 369–611 (VVGGLVALPG…YLAWIREHTA (243 aa)) form the Peptidase S1 domain. Histidine 408 serves as the catalytic Charge relay system. Residue asparagine 429 is glycosylated (N-linked (GlcNAc...) asparagine). Residue aspartate 457 is the Charge relay system of the active site. The Charge relay system role is filled by serine 560.

It belongs to the peptidase S1 family. Interacts with HRG; the interaction, which is enhanced in the presence of zinc ions and inhibited by heparin-binding, inhibits factor XII autoactivation and contact-initiated coagulation. Post-translationally, O- and N-glycosylated.

The protein localises to the secreted. The enzyme catalyses Selective cleavage of Arg-|-Ile bonds in factor VII to form factor VIIa and factor XI to form factor XIa.. Its activity is regulated as follows. Activity is promoted in the presence of negatively charged surfaces. In terms of biological role, factor XII is a serum glycoprotein that participates in the initiation of blood coagulation, fibrinolysis, and the generation of bradykinin and angiotensin. Prekallikrein is cleaved by factor XII to form kallikrein, which then cleaves factor XII first to alpha-factor XIIa and then to beta-factor XIIa. Alpha-factor XIIa activates factor XI to factor XIa. This chain is Coagulation factor XII (F12), found in Bos taurus (Bovine).